A 458-amino-acid polypeptide reads, in one-letter code: MANNHHPKDEAYLSSVIPKRIRLFEEIQAEQLEQLQSRPHDPIKITLLPDGIEKEGRRWETSPMDIAVQISKGLAKSALVSSVNHVLWDMNRPLEGDCSLEIFGFDSDQGRNTFWHSSAHILGQALEQEYGCKLCIGPCEPRDEGFYYDSLYYGELGLNDNHFPNIEAKLPIRMAEFGVLHRNEDSGALGGMTRVRRFVQDDAHIFCRVDQVEEEVKGVLDFIDYVYRIFGFTYELTLSTRPKDHIGDLETWAKAENDLEKALDDFGKPWVIKEGDGAFYGPKIDITVSDARNRKFQCATIQLDFQLPACFKLKYLSEKNEMEAPVMIHSAVLGSIERMFAILLEHYKGIWPFWLSPRQAIVCSLSEDCSSYAKQVQKQINEVGYYVDIDESDRSLRKKVADARDAPYNYILVVGQKEVATGQVTVRLREDPEGRKDLPEMSIESLLDEFKFKTVNFL.

In terms of domain architecture, TGS spans 41–104; the sequence is DPIKITLLPD…EGDCSLEIFG (64 aa).

It belongs to the class-II aminoacyl-tRNA synthetase family.

It is found in the cytoplasm. It carries out the reaction tRNA(Thr) + L-threonine + ATP = L-threonyl-tRNA(Thr) + AMP + diphosphate + H(+). The protein is Probable threonine--tRNA ligase, cytoplasmic of Arabidopsis thaliana (Mouse-ear cress).